The primary structure comprises 345 residues: KRR1 small subunit processome component homolog (345 aa).

The region spanning 125 to 193 (DIIKIGNLVH…VRDIVLETMN (69 aa)) is the KH domain. Basic residues predominate over residues 232–245 (NISKRKQPKVKKQK). 2 disordered regions span residues 232 to 260 (NISKRKQPKVKKQKKEYTPFPPSQPESKV) and 273 to 329 (QEQK…VDVK). Positions 270-298 (FLNQEQKQAKRNQERTEKQKEAAKRQDER) form a coiled coil. Composition is skewed to basic and acidic residues over residues 276–302 (KQAKRNQERTEKQKEAAKRQDERRNKD) and 315–329 (LKKEDGFSSSKVDVK).

This sequence belongs to the KRR1 family. As to quaternary structure, monomer. Component of the ribosomal small subunit (SSU) processome.

The protein resides in the nucleus. It is found in the nucleolus. Functionally, required for 40S ribosome biogenesis. Involved in nucleolar processing of pre-18S ribosomal RNA and ribosome assembly. Binds to RNA. Required for female germline development, cell viability during eye development and for survival of dividing cells and epithelial cells during early wing disk development. In Drosophila erecta (Fruit fly), this protein is KRR1 small subunit processome component homolog.